Consider the following 76-residue polypeptide: MKFTLFSVLVVLLIATFVAADDCPRICTADFRPVCGTPSGGRRSANRTFGNQCSLDSHNCLNKGDTYDKLHDGECK.

A signal peptide spans 1–21 (MKFTLFSVLVVLLIATFVAAD). The region spanning 22 to 76 (DCPRICTADFRPVCGTPSGGRRSANRTFGNQCSLDSHNCLNKGDTYDKLHDGECK) is the Kazal-like domain. 3 disulfides stabilise this stretch: Cys-23-Cys-60, Cys-27-Cys-53, and Cys-35-Cys-75.

In terms of tissue distribution, expressed by the salivary gland.

The protein localises to the secreted. In terms of biological role, vasodilator protein that inhibits vasoconstriction of isolated rat femoral artery induced by phenylephrine. Since platelet aggregation and vasoconstriction are key hemostatic responses, particularly in small wounds, this protein likely participates in the antihemostatic responses during blood feeding. Blocks L-type calcium channels (Cav1/CACNA1) in left ventricular myocytes isolated from rat hearts. This chain is Vasotab-TY1, found in Tabanus yao (Horsefly).